Consider the following 503-residue polypeptide: MAAALRFDNIGKVFPGVRALDGISFDVQAGQVHGLMGENGAGKSTLLKILGGEYQPDSGSVLVDGRAMRFPSAAASIAAGVAVIHQELQYVPDLTVAENLLLGRLPSALGWVRKRDAQRFVRERLAAMGVDLDAQAKLRRLSIAQRQMVEICKALLRNARVIALDEPTSSLSHRETEVLFKLVDDLRRDGRALIYISHRMDEIYRLCDACTIFRDGRQVASHASLANVPRETLVRQMVGREISDIYHYAPRALGDVRLSARALEGDALRAGASFDVRAGEIVGFFGLVGAGRSELMRVIYGAQRRTGGALTLDGEPLDIRSTRDAIRRGIVLCPEDRKEEGIVAHASVAENINISCRRHGLRAGLFLDRKREAETADRFIKLLKIKTPNRRQKIRFLSGGNQQKAILARWLAEPDLKVVILDEPTRGIDVGAKHEIYGVIYELAKRGCAIVMVSSELPEVLGVSDRIVVMREGRIAGELARGEANEEAVLNLALPQGATAHAA.

ABC transporter domains are found at residues 5 to 240 (LRFD…MVGR) and 253 to 497 (LGDV…LPQG). An ATP-binding site is contributed by 37–44 (GENGAGKS).

This sequence belongs to the ABC transporter superfamily. Arabinose importer (TC 3.A.1.2.2) family. As to quaternary structure, the complex is composed of two ATP-binding proteins (AraG), two transmembrane proteins (AraH) and a solute-binding protein (AraF).

The protein localises to the cell inner membrane. It carries out the reaction L-arabinose(out) + ATP + H2O = L-arabinose(in) + ADP + phosphate + H(+). Its function is as follows. Part of the ABC transporter complex AraFGH involved in arabinose import. Responsible for energy coupling to the transport system. This chain is Arabinose import ATP-binding protein AraG, found in Burkholderia pseudomallei (strain 1710b).